The chain runs to 783 residues: Isoamylase 1, chloroplastic (783 aa).

The transit peptide at 1 to 43 directs the protein to the chloroplast; sequence MDAIKCSSSFLHHTKLNTLFSNHTFPKISAPNFKPLFRPISIS. D410 functions as the Nucleophile in the catalytic mechanism. E466 acts as the Proton donor in catalysis.

This sequence belongs to the glycosyl hydrolase 13 family. As to quaternary structure, associates with ISA2 to form the heteromultimeric complex Iso1 required for amylopectin synthesis.

Its subcellular location is the plastid. It is found in the chloroplast. It catalyses the reaction Hydrolysis of (1-&gt;6)-alpha-D-glucosidic branch linkages in glycogen, amylopectin and their beta-limit dextrins.. It participates in glycan biosynthesis; starch biosynthesis. Involved in the trimming of pre-amylopectin chains. Accelerates the crystallization of nascent amylopectin molecules during starch synthesis. ISA1 and ISA2 work exclusively together as a multimeric holoenzyme. ISA1-ISA2 removes preferentially branches that are very close to other branches. Promotes negative gravitropic responses in shoots by facilitating starch granules (statoliths) formation in hypocotyls. This chain is Isoamylase 1, chloroplastic, found in Arabidopsis thaliana (Mouse-ear cress).